We begin with the raw amino-acid sequence, 454 residues long: UDP-N-acetylmuramoylalanine--D-glutamate ligase (454 aa).

Residue 117-123 (GTNGKTT) participates in ATP binding.

It belongs to the MurCDEF family.

It localises to the cytoplasm. It catalyses the reaction UDP-N-acetyl-alpha-D-muramoyl-L-alanine + D-glutamate + ATP = UDP-N-acetyl-alpha-D-muramoyl-L-alanyl-D-glutamate + ADP + phosphate + H(+). It participates in cell wall biogenesis; peptidoglycan biosynthesis. Its function is as follows. Cell wall formation. Catalyzes the addition of glutamate to the nucleotide precursor UDP-N-acetylmuramoyl-L-alanine (UMA). The sequence is that of UDP-N-acetylmuramoylalanine--D-glutamate ligase from Alkaliphilus oremlandii (strain OhILAs) (Clostridium oremlandii (strain OhILAs)).